Reading from the N-terminus, the 177-residue chain is Secretion monitor (177 aa).

Positions 1–37 (MIGILNRWRQFGRRYFWPHLLLGMVAASLGVPLNLSG) are cleaved as a signal peptide.

Belongs to the SecM family.

Its subcellular location is the cytoplasm. It is found in the cytosol. It localises to the periplasm. In terms of biological role, regulates secA expression by translational coupling of the secM secA operon. Translational pausing at a specific Pro residue 5 residues before the end of the protein may allow disruption of a mRNA repressor helix that normally suppresses secA translation initiation. In Yersinia pestis bv. Antiqua (strain Antiqua), this protein is Secretion monitor.